Consider the following 198-residue polypeptide: Holliday junction branch migration complex subunit RuvA (198 aa).

Positions 1 to 63 are domain I; sequence MYDYIKGQLT…EDAQLLFGFH (63 aa). The tract at residues 64 to 142 is domain II; sequence SEEEKDVFLK…EAPKEESSKL (79 aa). The interval 143-147 is flexible linker; it reads PKAKH. Residues 148–198 form a domain III region; that stretch reads QENEQLDEAIEALLALGYKATELKKIRAFFEGTSETAEQYIKSALKMLMKG.

It belongs to the RuvA family. As to quaternary structure, homotetramer. Forms an RuvA(8)-RuvB(12)-Holliday junction (HJ) complex. HJ DNA is sandwiched between 2 RuvA tetramers; dsDNA enters through RuvA and exits via RuvB. An RuvB hexamer assembles on each DNA strand where it exits the tetramer. Each RuvB hexamer is contacted by two RuvA subunits (via domain III) on 2 adjacent RuvB subunits; this complex drives branch migration. In the full resolvosome a probable DNA-RuvA(4)-RuvB(12)-RuvC(2) complex forms which resolves the HJ.

The protein localises to the cytoplasm. Functionally, the RuvA-RuvB-RuvC complex processes Holliday junction (HJ) DNA during genetic recombination and DNA repair, while the RuvA-RuvB complex plays an important role in the rescue of blocked DNA replication forks via replication fork reversal (RFR). RuvA specifically binds to HJ cruciform DNA, conferring on it an open structure. The RuvB hexamer acts as an ATP-dependent pump, pulling dsDNA into and through the RuvAB complex. HJ branch migration allows RuvC to scan DNA until it finds its consensus sequence, where it cleaves and resolves the cruciform DNA. This chain is Holliday junction branch migration complex subunit RuvA, found in Streptococcus equi subsp. zooepidemicus (strain MGCS10565).